The following is a 434-amino-acid chain: ATP-sensitive inward rectifier potassium channel 14 (434 aa).

Over 1–81 (MGLARALRRL…LSDLFTTCVD (81 aa)) the chain is Cytoplasmic. At Cys79 the chain carries S-nitrosocysteine. The chain crosses the membrane as a helical span at residues 82–108 (VRWRWMCLLFSCSFLASWLLFGLTFWL). Residues 109 to 131 (IASLHGDLAAPPPPAPCFSQVAS) lie on the Extracellular side of the membrane. The helical; Pore-forming intramembrane region spans 132–148 (FLAAFLFALETQTSIGY). The Selectivity filter signature appears at 145 to 150 (SIGYGV). Topologically, residues 149–157 (GVRSVTEEC) are extracellular. The helical transmembrane segment at 158-185 (PAAVAAVVLQCIAGCVLDAFVVGAVMAK) threads the bilayer. Residues 186–434 (MAKPKKRNET…TPTLALTLPP (249 aa)) are Cytoplasmic-facing. The tract at residues 398-434 (QEEDEEEDTKEGTSAETPDRAASPQALTPTLALTLPP) is disordered. Positions 407–416 (KEGTSAETPD) are enriched in basic and acidic residues. Residues 418-434 (AASPQALTPTLALTLPP) show a composition bias toward low complexity.

The protein belongs to the inward rectifier-type potassium channel (TC 1.A.2.1) family. KCNJ14 subfamily. Expressed predominantly in motoneurons of cranial nerve motor nuclei within the general somatic and special visceral motor cell column.

The protein localises to the membrane. The catalysed reaction is K(+)(in) = K(+)(out). With respect to regulation, channel activity is regulated by variations of cytosolic pH; channels are activated by alkaline and inhibited by acidic pH values. Inhibited by Ba(2+) and Cs(+) in a voltage-dependent manner; sensitivity to those inhibitors is lower than in other Kir channels. Its function is as follows. Inward rectifier potassium channels are characterized by a greater tendency to allow potassium to flow into the cell rather than out of it. Their voltage dependence is regulated by the concentration of extracellular potassium; as external potassium is raised, the voltage range of the channel opening shifts to more positive voltages. This Rattus norvegicus (Rat) protein is ATP-sensitive inward rectifier potassium channel 14 (Kcnj14).